Consider the following 137-residue polypeptide: Small ribosomal subunit protein uS13 (137 aa).

A disordered region spans residues 114 to 137 (VTQKNARTRKGPRKTIMAKKDKGK). A compositionally biased stretch (basic residues) spans 119–130 (ARTRKGPRKTIM).

Belongs to the universal ribosomal protein uS13 family. In terms of assembly, part of the 30S ribosomal subunit. Forms a loose heterodimer with protein S19. Forms two bridges to the 50S subunit in the 70S ribosome.

Located at the top of the head of the 30S subunit, it contacts several helices of the 16S rRNA. In the 70S ribosome it contacts the 23S rRNA (bridge B1a) and protein L5 of the 50S subunit (bridge B1b), connecting the 2 subunits; these bridges are implicated in subunit movement. Contacts the tRNAs in the A and P-sites. This is Small ribosomal subunit protein uS13 from Mesomycoplasma hyopneumoniae (strain 232) (Mycoplasma hyopneumoniae).